We begin with the raw amino-acid sequence, 236 residues long: NLP effector protein 3 (236 aa).

An N-terminal signal peptide occupies residues Met1–Ala19. The Conserved undecapeptide motif I motif lies at Ala103–Asp113. The short motif at Gly120–Glu126 is the Hepta-peptide GHRHDWE motif II element.

The protein belongs to the Necrosis inducing protein (NPP1) family.

The protein resides in the secreted. In terms of biological role, secreted effector that contributes to virulence during infection by P.capsici. Induces distinct chlorosis at 3 days after inoculation of host C.annuum leaves, and all the chlorotic areas gradually turn brown and become moderately necrotic at 7 days after inoculation. Leads only to chlorotic areas, without necrosis at 7 days after non-host N.benthamiana leaves infection. Induces cell death in hot pepper. The polypeptide is NLP effector protein 3 (Phytophthora capsici).